Here is a 670-residue protein sequence, read N- to C-terminus: DNA mismatch repair protein MutL (670 aa).

Positions 363–451 (SFDRGRPLSR…RAAGGPASTH (89 aa)) are disordered. Over residues 379 to 389 (ERWRERHRPDA) the composition is skewed to basic and acidic residues.

This sequence belongs to the DNA mismatch repair MutL/HexB family.

In terms of biological role, this protein is involved in the repair of mismatches in DNA. It is required for dam-dependent methyl-directed DNA mismatch repair. May act as a 'molecular matchmaker', a protein that promotes the formation of a stable complex between two or more DNA-binding proteins in an ATP-dependent manner without itself being part of a final effector complex. The polypeptide is DNA mismatch repair protein MutL (Syntrophobacter fumaroxidans (strain DSM 10017 / MPOB)).